We begin with the raw amino-acid sequence, 446 residues long: ATP-dependent RNA helicase SUB2 (446 aa).

N-acetylserine is present on serine 2. Phosphoserine occurs at positions 13 and 37. Residues 23-41 (ASKAAEAGETGAATSATEG) are compositionally biased toward low complexity. The interval 23–52 (ASKAAEAGETGAATSATEGDNNNNTAAGDK) is disordered. Residues 62–90 (TGFKDFLLKPELSRAIIDCGFEHPSEVQQ) carry the Q motif motif. One can recognise a Helicase ATP-binding domain in the interval 93–268 (IPQSIHGTDV…RRFLQNPLEI (176 aa)). ATP is bound at residue 106–113 (AKSGLGKT). Residue threonine 169 is modified to Phosphothreonine. Positions 215–218 (DECD) match the DECD box motif. Residues 280–441 (GLQQYYIKLE…EFPEEGIDPS (162 aa)) form the Helicase C-terminal domain.

Belongs to the DEAD box helicase family. DECD subfamily. As to quaternary structure, component of the TREX complex composed of at least SUB2, TEX1, YRA1 and the four THO complex components: HPR1, MFT1, THO2 and THP1. Interacts with HPR1, YRA1, and YRA2. SUB2 may mediate the interaction between the THO complex and YRA1. Associates with growing mRNP complexes during transcription. This association requires the presence of HPR1. Also interacts with SAC3. Interacts with THO1 in the presence of RNA; this interaction facilitates RNA binding of SUB2.

The protein resides in the nucleus. It catalyses the reaction ATP + H2O = ADP + phosphate + H(+). Functionally, ATP-binding RNA helicase component of the TREX complex involved in transcription elongation and required for the export of mRNA out of the nucleus. SUB2 also plays a role in pre-mRNA splicing and spliceosome assembly. May be involved in rDNA and telomeric silencing, and maintenance of genome integrity. Associates with THO1, which facilitates RNA binding of SUB2 and likely plays a role in mRNA export. In Saccharomyces cerevisiae (strain ATCC 204508 / S288c) (Baker's yeast), this protein is ATP-dependent RNA helicase SUB2 (SUB2).